A 269-amino-acid polypeptide reads, in one-letter code: Ribosomal RNA small subunit methyltransferase A (269 aa).

Positions 11, 13, 38, 59, 84, and 105 each coordinate S-adenosyl-L-methionine.

Belongs to the class I-like SAM-binding methyltransferase superfamily. rRNA adenine N(6)-methyltransferase family. RsmA subfamily.

The protein resides in the cytoplasm. It catalyses the reaction adenosine(1518)/adenosine(1519) in 16S rRNA + 4 S-adenosyl-L-methionine = N(6)-dimethyladenosine(1518)/N(6)-dimethyladenosine(1519) in 16S rRNA + 4 S-adenosyl-L-homocysteine + 4 H(+). Its function is as follows. Specifically dimethylates two adjacent adenosines (A1518 and A1519) in the loop of a conserved hairpin near the 3'-end of 16S rRNA in the 30S particle. May play a critical role in biogenesis of 30S subunits. The chain is Ribosomal RNA small subunit methyltransferase A from Acaryochloris marina (strain MBIC 11017).